Here is a 307-residue protein sequence, read N- to C-terminus: Thioredoxin-related transmembrane protein 2-B (307 aa).

The N-terminal stretch at 1-19 is a signal peptide; it reads MALLTPLFAFLYHLPQVYK. Over 20 to 111 the chain is Extracellular; that stretch reads WLLKPYYIAS…VILFFRLDIR (92 aa). Residues 112–132 form a helical membrane-spanning segment; sequence LGLLYLTLCIVFLMTCKPPLY. A Thioredoxin domain is found at 132-269; the sequence is YMGPEYIKYF…LYQKSKKLGK (138 aa). At 133-307 the chain is on the cytoplasmic side; the sequence is MGPEYIKYFS…AMDTESKKDK (175 aa). The disordered stretch occupies residues 268-307; it reads GKTKEKLERPSELVFSTVPEEEEPEAETISAMDTESKKDK. The span at 269–278 shows a compositional bias: basic and acidic residues; the sequence is KTKEKLERPS. The Di-lysine motif motif lies at 304–307; sequence KKDK.

In terms of assembly, monomer. Homodimer; disulfide-linked. Occurs in both reduced and oxidized monomeric form. Oxidative conditions increase homodimerization.

It localises to the endoplasmic reticulum membrane. Its subcellular location is the mitochondrion membrane. Functionally, endoplasmic reticulum and mitochondria-associated protein that probably functions as a regulator of cellular redox state and thereby regulates protein post-translational modification, protein folding and mitochondrial activity. In Danio rerio (Zebrafish), this protein is Thioredoxin-related transmembrane protein 2-B (tmx2b).